The chain runs to 184 residues: Oligoribonuclease (184 aa).

In terms of domain architecture, Exonuclease spans 8–169; sequence LIWIDLEMTG…EDIHESIIEL (162 aa). The active site involves Tyr-129.

The protein belongs to the oligoribonuclease family.

The protein resides in the cytoplasm. In terms of biological role, 3'-to-5' exoribonuclease specific for small oligoribonucleotides. The polypeptide is Oligoribonuclease (Buchnera aphidicola subsp. Schizaphis graminum (strain Sg)).